We begin with the raw amino-acid sequence, 164 residues long: SsrA-binding protein (164 aa).

The tract at residues 141 to 164 is disordered; that stretch reads KLHDKRQDEKQKSIKREINSALKR. Residues 145–158 show a composition bias toward basic and acidic residues; that stretch reads KRQDEKQKSIKREI.

This sequence belongs to the SmpB family.

The protein localises to the cytoplasm. Its function is as follows. Required for rescue of stalled ribosomes mediated by trans-translation. Binds to transfer-messenger RNA (tmRNA), required for stable association of tmRNA with ribosomes. tmRNA and SmpB together mimic tRNA shape, replacing the anticodon stem-loop with SmpB. tmRNA is encoded by the ssrA gene; the 2 termini fold to resemble tRNA(Ala) and it encodes a 'tag peptide', a short internal open reading frame. During trans-translation Ala-aminoacylated tmRNA acts like a tRNA, entering the A-site of stalled ribosomes, displacing the stalled mRNA. The ribosome then switches to translate the ORF on the tmRNA; the nascent peptide is terminated with the 'tag peptide' encoded by the tmRNA and targeted for degradation. The ribosome is freed to recommence translation, which seems to be the essential function of trans-translation. The polypeptide is SsrA-binding protein (Prochlorococcus marinus (strain MIT 9215)).